We begin with the raw amino-acid sequence, 329 residues long: 4-hydroxythreonine-4-phosphate dehydrogenase (329 aa).

Residues His-136 and Thr-137 each contribute to the substrate site. The a divalent metal cation site is built by His-166, His-211, and His-266. 3 residues coordinate substrate: Lys-274, Asn-283, and Arg-292.

Belongs to the PdxA family. As to quaternary structure, homodimer. Zn(2+) serves as cofactor. Mg(2+) is required as a cofactor. The cofactor is Co(2+).

Its subcellular location is the cytoplasm. It catalyses the reaction 4-(phosphooxy)-L-threonine + NAD(+) = 3-amino-2-oxopropyl phosphate + CO2 + NADH. The protein operates within cofactor biosynthesis; pyridoxine 5'-phosphate biosynthesis; pyridoxine 5'-phosphate from D-erythrose 4-phosphate: step 4/5. Its function is as follows. Catalyzes the NAD(P)-dependent oxidation of 4-(phosphooxy)-L-threonine (HTP) into 2-amino-3-oxo-4-(phosphooxy)butyric acid which spontaneously decarboxylates to form 3-amino-2-oxopropyl phosphate (AHAP). In Shigella dysenteriae serotype 1 (strain Sd197), this protein is 4-hydroxythreonine-4-phosphate dehydrogenase.